Here is a 136-residue protein sequence, read N- to C-terminus: Large ribosomal subunit protein uL16 (136 aa).

The protein belongs to the universal ribosomal protein uL16 family. As to quaternary structure, part of the 50S ribosomal subunit.

In terms of biological role, binds 23S rRNA and is also seen to make contacts with the A and possibly P site tRNAs. The sequence is that of Large ribosomal subunit protein uL16 from Orientia tsutsugamushi (strain Boryong) (Rickettsia tsutsugamushi).